The primary structure comprises 264 residues: Indole-3-glycerol phosphate synthase (264 aa).

The protein belongs to the TrpC family.

The enzyme catalyses 1-(2-carboxyphenylamino)-1-deoxy-D-ribulose 5-phosphate + H(+) = (1S,2R)-1-C-(indol-3-yl)glycerol 3-phosphate + CO2 + H2O. Its pathway is amino-acid biosynthesis; L-tryptophan biosynthesis; L-tryptophan from chorismate: step 4/5. This chain is Indole-3-glycerol phosphate synthase, found in Xylella fastidiosa (strain M23).